We begin with the raw amino-acid sequence, 282 residues long: B3 domain-containing protein At5g25475 (282 aa).

The TF-B3 DNA-binding region spans 20–114 (WKSLSPGQTW…NLEVQIFKNN (95 aa)). Positions 127–178 (PETEPFHPTPKKPHKETTPASSFASGSGCSANGGTNGRGKQRSSDVKNPERY) are disordered. The segment covering 144–159 (TPASSFASGSGCSANG) has biased composition (low complexity).

Its subcellular location is the nucleus. This Arabidopsis thaliana (Mouse-ear cress) protein is B3 domain-containing protein At5g25475.